The primary structure comprises 161 residues: uncharacterized protein (161 aa).

This is an uncharacterized protein from Encephalitozoon cuniculi (strain GB-M1) (Microsporidian parasite).